The sequence spans 104 residues: Nucleoid-associated protein GAU_1113 (104 aa).

It belongs to the YbaB/EbfC family. In terms of assembly, homodimer.

The protein localises to the cytoplasm. It localises to the nucleoid. Binds to DNA and alters its conformation. May be involved in regulation of gene expression, nucleoid organization and DNA protection. This chain is Nucleoid-associated protein GAU_1113, found in Gemmatimonas aurantiaca (strain DSM 14586 / JCM 11422 / NBRC 100505 / T-27).